The primary structure comprises 168 residues: 3-dehydroquinate dehydratase (168 aa).

Catalysis depends on Y22, which acts as the Proton acceptor. Residues N76, H82, and D89 each contribute to the substrate site. Residue H102 is the Proton donor of the active site. Residues 103–104 and R113 contribute to the substrate site; that span reads LT.

Belongs to the type-II 3-dehydroquinase family. Homododecamer.

It carries out the reaction 3-dehydroquinate = 3-dehydroshikimate + H2O. It functions in the pathway metabolic intermediate biosynthesis; chorismate biosynthesis; chorismate from D-erythrose 4-phosphate and phosphoenolpyruvate: step 3/7. Its function is as follows. Catalyzes a trans-dehydration via an enolate intermediate. The protein is 3-dehydroquinate dehydratase of Helicobacter acinonychis (strain Sheeba).